Reading from the N-terminus, the 938-residue chain is Isoleucine--tRNA ligase (938 aa).

Positions 58-68 (PYANGSIHIGH) match the 'HIGH' region motif. An N6-acetyllysine modification is found at Lys183. Glu561 serves as a coordination point for L-isoleucyl-5'-AMP. Positions 602–606 (KMSKS) match the 'KMSKS' region motif. Lys605 lines the ATP pocket. Zn(2+)-binding residues include Cys901, Cys904, Cys921, and Cys924.

This sequence belongs to the class-I aminoacyl-tRNA synthetase family. IleS type 1 subfamily. Monomer. Zn(2+) serves as cofactor.

Its subcellular location is the cytoplasm. It carries out the reaction tRNA(Ile) + L-isoleucine + ATP = L-isoleucyl-tRNA(Ile) + AMP + diphosphate. Its function is as follows. Catalyzes the attachment of isoleucine to tRNA(Ile). As IleRS can inadvertently accommodate and process structurally similar amino acids such as valine, to avoid such errors it has two additional distinct tRNA(Ile)-dependent editing activities. One activity is designated as 'pretransfer' editing and involves the hydrolysis of activated Val-AMP. The other activity is designated 'posttransfer' editing and involves deacylation of mischarged Val-tRNA(Ile). This is Isoleucine--tRNA ligase from Escherichia coli (strain ATCC 8739 / DSM 1576 / NBRC 3972 / NCIMB 8545 / WDCM 00012 / Crooks).